The primary structure comprises 290 residues: uncharacterized protein (290 aa).

The protein localises to the cell membrane. Its subcellular location is the membrane raft. This is an uncharacterized protein from Bacillus subtilis (strain 168).